We begin with the raw amino-acid sequence, 227 residues long: Ribosomal RNA small subunit methyltransferase G (227 aa).

S-adenosyl-L-methionine is bound by residues glycine 74, leucine 79, 124 to 125 (AE), and arginine 142.

The protein belongs to the methyltransferase superfamily. RNA methyltransferase RsmG family.

The protein resides in the cytoplasm. Functionally, specifically methylates the N7 position of guanine in position 518 of 16S rRNA. This chain is Ribosomal RNA small subunit methyltransferase G, found in Mycolicibacterium vanbaalenii (strain DSM 7251 / JCM 13017 / BCRC 16820 / KCTC 9966 / NRRL B-24157 / PYR-1) (Mycobacterium vanbaalenii).